The sequence spans 172 residues: VLLDGNGEVVQNGGTYYLLPQVWAQGGGVQLAKTGEETCPLTVVQSPNELSNGKPIRIESRLRSAFIPDDDKVRIGFAYAPKCAPSPWWTVLEDEQEGLSVKLSEDESTQFDYPFKFEQVSDKLHSYKLLYCEGKHEKCASIGINRDQKGYRRLVVTEDNPLTVVLKKDESS.

Cystine bridges form between Cys-39/Cys-83 and Cys-132/Cys-139.

Belongs to the protease inhibitor I3 (leguminous Kunitz-type inhibitor) family.

In terms of biological role, inhibition of trypsin. The protein is Trypsin inhibitor DE-3 of Erythrina variegata (Indian coral tree).